The primary structure comprises 274 residues: Large ribosomal subunit protein uL2 (274 aa).

The disordered stretch occupies residues 223 to 274 (VAMNPVDHPMGGGEGKASGGHPRSRTGLYAKGKKTRNTNKYSKNYILSRKKR).

Belongs to the universal ribosomal protein uL2 family. As to quaternary structure, part of the 50S ribosomal subunit. Forms a bridge to the 30S subunit in the 70S ribosome.

In terms of biological role, one of the primary rRNA binding proteins. Required for association of the 30S and 50S subunits to form the 70S ribosome, for tRNA binding and peptide bond formation. It has been suggested to have peptidyltransferase activity; this is somewhat controversial. Makes several contacts with the 16S rRNA in the 70S ribosome. The polypeptide is Large ribosomal subunit protein uL2 (Amoebophilus asiaticus (strain 5a2)).